The sequence spans 481 residues: Mediator of RNA polymerase II transcription subunit 3 (481 aa).

A coiled-coil region spans residues 79-107 (QEKFQMIRSKVLGLTERLQELSNDFEELQ). 2 disordered regions span residues 140-261 (AGAS…MGTP) and 415-463 (NTKG…KSAY). Residues 148–203 (TPTPAAATPTTAPTPGAGTKKAAKTAPTPTATATIGTPSNNAPTPATTATTPGTQA) are compositionally biased toward low complexity. Over residues 204-213 (KKPRKPRQTK) the composition is skewed to basic residues. The span at 214–248 (KQQQAAAAAAAVAQAQAQAQAQAQNQNQNNMQNKN) shows a compositional bias: low complexity. Polar residues predominate over residues 249–259 (ISNPGMNSNMG). A compositionally biased stretch (low complexity) spans 428–458 (MDQNQNQNQSQNQSQNQNQSMNMNMNNDSNN).

The protein belongs to the Mediator complex subunit 3 family. As to quaternary structure, component of the Mediator complex.

It is found in the nucleus. Component of the Mediator complex, a coactivator involved in regulated gene transcription of nearly all RNA polymerase II-dependent genes. Mediator functions as a bridge to convey information from gene-specific regulatory proteins to the basal RNA polymerase II transcription machinery. Mediator is recruited to promoters by direct interactions with regulatory proteins and serves as a scaffold for the assembly of a functional preinitiation complex with RNA polymerase II and the general transcription factors. The chain is Mediator of RNA polymerase II transcription subunit 3 (PGD1) from Candida glabrata (strain ATCC 2001 / BCRC 20586 / JCM 3761 / NBRC 0622 / NRRL Y-65 / CBS 138) (Yeast).